The chain runs to 301 residues: Protoheme IX farnesyltransferase (301 aa).

9 helical membrane passes run 34–54 (LVVF…HPLI), 55–75 (GLVS…FNMW), 102–121 (AWEC…AIAV), 125–144 (SALL…TMLL), 152–172 (IVIG…SVSG), 181–201 (LFAI…LLTL), 222–242 (SHIL…GLFV), 247–267 (LYEI…IAVF), and 280–300 (GLFK…IACV).

Belongs to the UbiA prenyltransferase family. Protoheme IX farnesyltransferase subfamily.

Its subcellular location is the cell inner membrane. The catalysed reaction is heme b + (2E,6E)-farnesyl diphosphate + H2O = Fe(II)-heme o + diphosphate. It participates in porphyrin-containing compound metabolism; heme O biosynthesis; heme O from protoheme: step 1/1. In terms of biological role, converts heme B (protoheme IX) to heme O by substitution of the vinyl group on carbon 2 of heme B porphyrin ring with a hydroxyethyl farnesyl side group. The protein is Protoheme IX farnesyltransferase of Anaplasma marginale (strain Florida).